The sequence spans 480 residues: Glycogen synthase (480 aa).

ADP-alpha-D-glucose is bound at residue K15.

It belongs to the glycosyltransferase 1 family. Bacterial/plant glycogen synthase subfamily.

The catalysed reaction is [(1-&gt;4)-alpha-D-glucosyl](n) + ADP-alpha-D-glucose = [(1-&gt;4)-alpha-D-glucosyl](n+1) + ADP + H(+). It participates in glycan biosynthesis; glycogen biosynthesis. Synthesizes alpha-1,4-glucan chains using ADP-glucose. The sequence is that of Glycogen synthase from Opitutus terrae (strain DSM 11246 / JCM 15787 / PB90-1).